The sequence spans 157 residues: Methylamine utilization protein MauL (157 aa).

It participates in one-carbon metabolism; methylamine degradation. In terms of biological role, probably involved in TTQ prosthetic group biosynthesis. The chain is Methylamine utilization protein MauL (mauL) from Methylobacillus flagellatus (strain ATCC 51484 / DSM 6875 / VKM B-1610 / KT).